The sequence spans 508 residues: MDFSIKACDWTKGSSNGFLTGKSDCIVIGVFESQTLSGAALEIDAATKGLLTRIIKAGDMDGKAGTTLFLHEVSGIGASRVLLVGLGKQDAFNQKAYGDAARAAWRALLSTKIVQVTFTLAQLPILERSADWAVRAAILALRELTYKFTQMKSKPDTSARALKRIVFSVNTGDEKAAKLAAKQGAALANGMDLTRDLGNLPSNVCTPTYLANTAKKLAKDWKLKVEVLGEKQCEALKMGSFLSVTAGSVEPAQFIVLQYQGGAAKAAPVVLVGKGVTFDTGGISLKPGEGMDEMKYDMCGAGSVLGTLRAVAEMGLKINVVGIIPAVENMPSATATKPGDIVTSMKGLTIEVLNTDAEGRLILCDALTYAERFKPAAVIDIATLTGACIIALGHHNSGLFSKDDALAGELLDASREASDPAWRMPLDDEYQDQLKSNFADLANIGGRPAGSVTAACFLSRFTEAYPWAHLDIAGTAWKSGAAKGATGRPVPLLAQFLIDRAADGRATQ.

Positions 274 and 279 each coordinate Mn(2+). The active site involves Lys-286. Positions 297, 356, and 358 each coordinate Mn(2+). Residue Arg-360 is part of the active site.

It belongs to the peptidase M17 family. The cofactor is Mn(2+).

It localises to the cytoplasm. The enzyme catalyses Release of an N-terminal amino acid, Xaa-|-Yaa-, in which Xaa is preferably Leu, but may be other amino acids including Pro although not Arg or Lys, and Yaa may be Pro. Amino acid amides and methyl esters are also readily hydrolyzed, but rates on arylamides are exceedingly low.. It carries out the reaction Release of an N-terminal amino acid, preferentially leucine, but not glutamic or aspartic acids.. Functionally, presumably involved in the processing and regular turnover of intracellular proteins. Catalyzes the removal of unsubstituted N-terminal amino acids from various peptides. The polypeptide is Probable cytosol aminopeptidase (Paraburkholderia xenovorans (strain LB400)).